The primary structure comprises 117 residues: Hainantoxin-XV-3 (117 aa).

The signal sequence occupies residues methionine 1 to serine 20. Residues serine 20 to glutamate 55 are disordered. The propeptide occupies serine 21–arginine 56. The span at asparagine 23–glutamate 55 shows a compositional bias: basic and acidic residues. 4 disulfides stabilise this stretch: cysteine 58/cysteine 72, cysteine 65/cysteine 78, cysteine 69/cysteine 115, and cysteine 71/cysteine 91.

It belongs to the neurotoxin 03 (Tx2) family. 02 subfamily. HNTX-XV sub-subfamily. Expressed by the venom gland.

Its subcellular location is the secreted. Putative ion channel inhibitor. In Cyriopagopus hainanus (Chinese bird spider), this protein is Hainantoxin-XV-3.